The primary structure comprises 471 residues: Cysteine--tRNA ligase (471 aa).

Cysteine 30 contacts Zn(2+). Residues 32–42 (PTVYNFAHIGN) carry the 'HIGH' region motif. Positions 212, 237, and 241 each coordinate Zn(2+). Positions 270 to 274 (KMSKS) match the 'KMSKS' region motif. Lysine 273 contributes to the ATP binding site.

This sequence belongs to the class-I aminoacyl-tRNA synthetase family. In terms of assembly, monomer. It depends on Zn(2+) as a cofactor.

Its subcellular location is the cytoplasm. The enzyme catalyses tRNA(Cys) + L-cysteine + ATP = L-cysteinyl-tRNA(Cys) + AMP + diphosphate. In Leptospira interrogans serogroup Icterohaemorrhagiae serovar Lai (strain 56601), this protein is Cysteine--tRNA ligase.